We begin with the raw amino-acid sequence, 507 residues long: ATP synthase subunit alpha, chloroplastic (507 aa).

ATP is bound at residue Gly-170–Thr-177.

The protein belongs to the ATPase alpha/beta chains family. F-type ATPases have 2 components, CF(1) - the catalytic core - and CF(0) - the membrane proton channel. CF(1) has five subunits: alpha(3), beta(3), gamma(1), delta(1), epsilon(1). CF(0) has four main subunits: a, b, b' and c.

It is found in the plastid. Its subcellular location is the chloroplast thylakoid membrane. The enzyme catalyses ATP + H2O + 4 H(+)(in) = ADP + phosphate + 5 H(+)(out). Its function is as follows. Produces ATP from ADP in the presence of a proton gradient across the membrane. The alpha chain is a regulatory subunit. This chain is ATP synthase subunit alpha, chloroplastic, found in Tetradesmus obliquus (Green alga).